Consider the following 820-residue polypeptide: G-type lectin S-receptor-like serine/threonine-protein kinase At1g11280 (820 aa).

An N-terminal signal peptide occupies residues 1–28 (MGIHLGEIGIVLFPWFLWLSLFLSCGYA). In terms of domain architecture, Bulb-type lectin spans 29–148 (AITISSPLTL…VSENLLWQSF (120 aa)). At 29 to 434 (AITISSPLTL…SELAGSRRTK (406 aa)) the chain is on the extracellular side. N-linked (GlcNAc...) asparagine glycans are attached at residues N57, N92, N98, N241, and N272. The EGF-like domain maps to 283–319 (PANLCDLYGACGPFGLCVTSNPTKCKCMKGFVPKYKE). 2 disulfide bridges follow: C287–C299 and C293–C307. N-linked (GlcNAc...) asparagine glycans are attached at residues N325, N341, and N384. In terms of domain architecture, PAN spans 338–422 (CQANLSTKTQ…VGGEFLSIRL (85 aa)). 2 disulfide bridges follow: C377–C398 and C381–C387. A helical transmembrane segment spans residues 435–455 (IIVGSISLSIFVILAFGSYKY). Residues 456-820 (WRYRAKQNVG…HVTQTEIYGR (365 aa)) are Cytoplasmic-facing. Positions 505-792 (FNVSNKLGQG…DLPRPKQPLF (288 aa)) constitute a Protein kinase domain. Residues 511-519 (LGQGGFGPV) and K533 contribute to the ATP site. Phosphoserine occurs at positions 539 and 554. The segment at 594 to 611 (TLKLQIDWPKRFNIIQGV) is caM-binding. The active-site Proton acceptor is D630. A phosphoserine mark is found at S634 and S647. Position 664 is a phosphothreonine (T664). Phosphoserine occurs at positions 707, 708, and 808. T815 is subject to Phosphothreonine.

Belongs to the protein kinase superfamily. Ser/Thr protein kinase family.

It is found in the cell membrane. The enzyme catalyses L-seryl-[protein] + ATP = O-phospho-L-seryl-[protein] + ADP + H(+). The catalysed reaction is L-threonyl-[protein] + ATP = O-phospho-L-threonyl-[protein] + ADP + H(+). This Arabidopsis thaliana (Mouse-ear cress) protein is G-type lectin S-receptor-like serine/threonine-protein kinase At1g11280.